Reading from the N-terminus, the 189-residue chain is uncharacterized protein (189 aa).

The stretch at 31-54 forms a coiled coil; the sequence is KCENIDDLANRYEVSKQEVEKVFK. EF-hand domains are found at residues 47 to 82, 83 to 118, 120 to 155, and 157 to 189; these read QEVEKVFKIFQLMDDDGSGTISSSEVAKMLNELGID, VSPKVVQAVMRSSDVSGDGQIDFEEFLAAVTSKIKL, TVKADVQLMLSKIDNNPEKVISAEELVVAWSETVST, and ITVKEACALIQQADTQGRGKATIHEFITMCQTV. Positions 60, 62, 64, 66, 71, 96, 98, 100, 102, 107, 133, 135, 137, and 144 each coordinate Ca(2+).

This is an uncharacterized protein from Caenorhabditis elegans.